The following is a 297-amino-acid chain: N-acetylmuramic acid 6-phosphate etherase (297 aa).

The SIS domain maps to 55 to 218; it reads AAKRYSKGGR…STGVMIKQGK (164 aa). Glu-83 functions as the Proton donor in the catalytic mechanism. The active site involves Glu-114.

This sequence belongs to the GCKR-like family. MurNAc-6-P etherase subfamily. In terms of assembly, homodimer.

The catalysed reaction is N-acetyl-D-muramate 6-phosphate + H2O = N-acetyl-D-glucosamine 6-phosphate + (R)-lactate. Its pathway is amino-sugar metabolism; N-acetylmuramate degradation. Specifically catalyzes the cleavage of the D-lactyl ether substituent of MurNAc 6-phosphate, producing GlcNAc 6-phosphate and D-lactate. The chain is N-acetylmuramic acid 6-phosphate etherase from Lactobacillus gasseri (strain ATCC 33323 / DSM 20243 / BCRC 14619 / CIP 102991 / JCM 1131 / KCTC 3163 / NCIMB 11718 / NCTC 13722 / AM63).